Reading from the N-terminus, the 627-residue chain is Threonine--tRNA ligase (627 aa).

The tract at residues 221–523 is catalytic; that stretch reads DHRKLGRELG…LIEHFAGDFP (303 aa). Residues C319, H370, and H500 each coordinate Zn(2+).

The protein belongs to the class-II aminoacyl-tRNA synthetase family. Homodimer. It depends on Zn(2+) as a cofactor.

It localises to the cytoplasm. It catalyses the reaction tRNA(Thr) + L-threonine + ATP = L-threonyl-tRNA(Thr) + AMP + diphosphate + H(+). Functionally, catalyzes the attachment of threonine to tRNA(Thr) in a two-step reaction: L-threonine is first activated by ATP to form Thr-AMP and then transferred to the acceptor end of tRNA(Thr). Also edits incorrectly charged L-seryl-tRNA(Thr). In Gloeobacter violaceus (strain ATCC 29082 / PCC 7421), this protein is Threonine--tRNA ligase.